A 419-amino-acid chain; its full sequence is Serine/threonine-protein kinase Kist (419 aa).

The Protein kinase domain maps to 23–303; that stretch reads WQVQSRLGSG…PAEMALCSPF (281 aa). ATP-binding positions include 29-37 and lysine 54; that span reads LGSGSSASV. Residue aspartate 158 is the Proton acceptor of the active site. In terms of domain architecture, RRM spans 323 to 405; sequence LRLLNVLDDD…GKFVVATFYP (83 aa).

It belongs to the protein kinase superfamily. Ser/Thr protein kinase family. In terms of assembly, interacts with PAM and CDKN1B/p27Kip1. Interacts with stathmin.

The protein localises to the nucleus. The catalysed reaction is L-seryl-[protein] + ATP = O-phospho-L-seryl-[protein] + ADP + H(+). It catalyses the reaction L-threonyl-[protein] + ATP = O-phospho-L-threonyl-[protein] + ADP + H(+). In terms of biological role, upon serum stimulation, phosphorylates CDKN1B/p27Kip1, thus controlling CDKN1B subcellular location and cell cycle progression in G1 phase. May be involved in trafficking and/or processing of RNA. The chain is Serine/threonine-protein kinase Kist (Uhmk1) from Mus musculus (Mouse).